A 483-amino-acid chain; its full sequence is Siroheme synthase (483 aa).

Positions 1–203 (MNYFPIFANL…RQNTLAEREL (203 aa)) are precorrin-2 dehydrogenase /sirohydrochlorin ferrochelatase. NAD(+)-binding positions include 22–23 (AV) and 43–44 (KH). At S128 the chain carries Phosphoserine. Residues 217-483 (GSVSLVGAGP…GGLNAGQRAA (267 aa)) form a uroporphyrinogen-III C-methyltransferase region. Residue P226 participates in S-adenosyl-L-methionine binding. D249 acts as the Proton acceptor in catalysis. The active-site Proton donor is K271. S-adenosyl-L-methionine contacts are provided by residues 302-304 (GGD), V307, 332-333 (TA), M384, and G413.

This sequence in the N-terminal section; belongs to the precorrin-2 dehydrogenase / sirohydrochlorin ferrochelatase family. It in the C-terminal section; belongs to the precorrin methyltransferase family.

It catalyses the reaction uroporphyrinogen III + 2 S-adenosyl-L-methionine = precorrin-2 + 2 S-adenosyl-L-homocysteine + H(+). The enzyme catalyses precorrin-2 + NAD(+) = sirohydrochlorin + NADH + 2 H(+). The catalysed reaction is siroheme + 2 H(+) = sirohydrochlorin + Fe(2+). The protein operates within cofactor biosynthesis; adenosylcobalamin biosynthesis; precorrin-2 from uroporphyrinogen III: step 1/1. It participates in cofactor biosynthesis; adenosylcobalamin biosynthesis; sirohydrochlorin from precorrin-2: step 1/1. It functions in the pathway porphyrin-containing compound metabolism; siroheme biosynthesis; precorrin-2 from uroporphyrinogen III: step 1/1. Its pathway is porphyrin-containing compound metabolism; siroheme biosynthesis; siroheme from sirohydrochlorin: step 1/1. The protein operates within porphyrin-containing compound metabolism; siroheme biosynthesis; sirohydrochlorin from precorrin-2: step 1/1. In terms of biological role, multifunctional enzyme that catalyzes the SAM-dependent methylations of uroporphyrinogen III at position C-2 and C-7 to form precorrin-2 via precorrin-1. Then it catalyzes the NAD-dependent ring dehydrogenation of precorrin-2 to yield sirohydrochlorin. Finally, it catalyzes the ferrochelation of sirohydrochlorin to yield siroheme. In Neisseria meningitidis serogroup B (strain ATCC BAA-335 / MC58), this protein is Siroheme synthase.